The sequence spans 231 residues: uncharacterized protein (231 aa).

An N-terminal signal peptide occupies residues 1–17 (MFGKILTTSLLIAMTFA). The disordered stretch occupies residues 197–231 (KARKQQKNEGDDEETEDEQKIGSAIDGWVERQAKL).

This is an uncharacterized protein from Caenorhabditis elegans.